A 457-amino-acid polypeptide reads, in one-letter code: Zinc finger protein ZPR1 (457 aa).

Polar residues predominate over residues Met1 to Pro13. The segment at Met1 to Pro21 is disordered. C4-type zinc fingers lie at residues Cys43 to Cys75 and Cys261 to Cys293. The interval Val414–Ala457 is disordered. Basic and acidic residues-rich tracts occupy residues Asp425–Glu438 and Met448–Ala457.

This sequence belongs to the ZPR1 family.

Its function is as follows. Might mediate EGFR and FGFR signal transduction cascades required for lumen formation in tracheal cells. This chain is Zinc finger protein ZPR1, found in Drosophila melanogaster (Fruit fly).